The sequence spans 336 residues: NAC domain-containing protein 100 (336 aa).

An NAC domain is found at leucine 16–lysine 166. Residues valine 113 to lysine 172 mediate DNA binding. The interval arginine 313–tyrosine 336 is disordered.

The protein localises to the nucleus. In terms of biological role, binds to the promoter regions of genes involved in chlorophyll catabolic processes, such as NYC1, SGR1, SGR2 and PAO. The sequence is that of NAC domain-containing protein 100 from Arabidopsis thaliana (Mouse-ear cress).